We begin with the raw amino-acid sequence, 311 residues long: tRNA-cytidine(32) 2-sulfurtransferase (311 aa).

A PP-loop motif motif is present at residues 47-52 (SGGKDS). The [4Fe-4S] cluster site is built by Cys-122, Cys-125, and Cys-213.

This sequence belongs to the TtcA family. As to quaternary structure, homodimer. Mg(2+) serves as cofactor. Requires [4Fe-4S] cluster as cofactor.

The protein resides in the cytoplasm. The enzyme catalyses cytidine(32) in tRNA + S-sulfanyl-L-cysteinyl-[cysteine desulfurase] + AH2 + ATP = 2-thiocytidine(32) in tRNA + L-cysteinyl-[cysteine desulfurase] + A + AMP + diphosphate + H(+). It participates in tRNA modification. Its function is as follows. Catalyzes the ATP-dependent 2-thiolation of cytidine in position 32 of tRNA, to form 2-thiocytidine (s(2)C32). The sulfur atoms are provided by the cysteine/cysteine desulfurase (IscS) system. This is tRNA-cytidine(32) 2-sulfurtransferase from Salmonella choleraesuis (strain SC-B67).